We begin with the raw amino-acid sequence, 163 residues long: MPSLDVVSVVDMQAMDNAVNNAKRDLGNRYDFKNAKYELVLNRKDKKIEIVAEDEFKLKAIIETLIQQCVRFKLDSKCLDVADAHTVSLGAAKTEIKIKDGLTKETASKITKFIKSTKLKLDSAIQGEQIRITGKQIDDLQEIMQLLNGQDFDVPLQYVNMKR.

This sequence belongs to the YajQ family.

Functionally, nucleotide-binding protein. In Dehalococcoides mccartyi (strain ATCC BAA-2266 / KCTC 15142 / 195) (Dehalococcoides ethenogenes (strain 195)), this protein is Nucleotide-binding protein DET1318.